The following is a 138-amino-acid chain: Ribosome-binding factor A (138 aa).

This sequence belongs to the RbfA family. In terms of assembly, monomer. Binds 30S ribosomal subunits, but not 50S ribosomal subunits or 70S ribosomes.

The protein localises to the cytoplasm. Its function is as follows. One of several proteins that assist in the late maturation steps of the functional core of the 30S ribosomal subunit. Associates with free 30S ribosomal subunits (but not with 30S subunits that are part of 70S ribosomes or polysomes). Required for efficient processing of 16S rRNA. May interact with the 5'-terminal helix region of 16S rRNA. This is Ribosome-binding factor A from Bradyrhizobium sp. (strain ORS 278).